The chain runs to 84 residues: uncharacterized protein (84 aa).

2 helical membrane-spanning segments follow: residues 7 to 27 and 52 to 72; these read HVNF…ILCI and ITII…INPC.

The protein resides in the membrane. This is an uncharacterized protein from Saccharomyces cerevisiae (strain ATCC 204508 / S288c) (Baker's yeast).